The following is a 322-amino-acid chain: Hydrolase C26A3.11 (322 aa).

The region spanning 44 to 290 (FRIGLVQLAN…PSIVYADIDP (247 aa)) is the CN hydrolase domain. Catalysis depends on Glu-83, which acts as the Proton acceptor. Catalysis depends on Lys-154, which acts as the Proton donor. Cys-195 (nucleophile) is an active-site residue.

The protein belongs to the carbon-nitrogen hydrolase superfamily. NIT1/NIT2 family.

The protein is Hydrolase C26A3.11 of Schizosaccharomyces pombe (strain 972 / ATCC 24843) (Fission yeast).